The following is a 344-amino-acid chain: Nuclear distribution protein nudE-like 1-B (344 aa).

A coiled-coil region spans residues 13 to 190 (KEEIVYWREL…LAVRERQTDG (178 aa)). Disordered regions lie at residues 186-209 (RQTD…TDSS) and 325-344 (PPGV…PLSV). Residues 333–344 (PPSPPGLLPLSV) are compositionally biased toward pro residues.

It belongs to the nudE family. Phosphorylated in mitosis.

It is found in the cytoplasm. It localises to the cytoskeleton. Its subcellular location is the microtubule organizing center. The protein resides in the centrosome. The protein localises to the spindle. In terms of biological role, required for organization of the cellular microtubule array and microtubule anchoring at the centrosome. Positively regulates the activity of the minus-end directed microtubule motor protein dynein. May enhance dynein-mediated microtubule sliding by targeting dynein to the microtubule plus end. Positively regulates lysosome peripheral distribution and ruffled border formation in osteoclasts. The sequence is that of Nuclear distribution protein nudE-like 1-B (ndel1-b) from Xenopus laevis (African clawed frog).